A 438-amino-acid chain; its full sequence is Methylenetetrahydrofolate--tRNA-(uracil-5-)-methyltransferase TrmFO (438 aa).

7–12 is an FAD binding site; the sequence is GAGLAG.

Belongs to the MnmG family. TrmFO subfamily. FAD is required as a cofactor.

Its subcellular location is the cytoplasm. The catalysed reaction is uridine(54) in tRNA + (6R)-5,10-methylene-5,6,7,8-tetrahydrofolate + NADH + H(+) = 5-methyluridine(54) in tRNA + (6S)-5,6,7,8-tetrahydrofolate + NAD(+). It catalyses the reaction uridine(54) in tRNA + (6R)-5,10-methylene-5,6,7,8-tetrahydrofolate + NADPH + H(+) = 5-methyluridine(54) in tRNA + (6S)-5,6,7,8-tetrahydrofolate + NADP(+). In terms of biological role, catalyzes the folate-dependent formation of 5-methyl-uridine at position 54 (M-5-U54) in all tRNAs. This chain is Methylenetetrahydrofolate--tRNA-(uracil-5-)-methyltransferase TrmFO, found in Sulfurihydrogenibium sp. (strain YO3AOP1).